We begin with the raw amino-acid sequence, 627 residues long: Interferon-induced GTP-binding protein MxB (627 aa).

The Dynamin-type G domain occupies 34–307 (DLALPAIAVI…LVHHIQRSLP (274 aa)). Residues 44-51 (GDQSSGKS) form a G1 motif region. 44 to 51 (GDQSSGKS) is a GTP binding site. The interval 69–71 (VTR) is G2 motif. A G3 motif region spans residues 145–148 (DLPG). GTP contacts are provided by residues 145-149 (DLPGI) and 214-217 (TKPD). A G4 motif region spans residues 214 to 217 (TKPD). Positions 246 to 249 (RCRG) are G5 motif. In terms of domain architecture, GED spans 541–627 (LSEMKLHLES…MKAQNLLATY (87 aa)).

It belongs to the TRAFAC class dynamin-like GTPase superfamily. Dynamin/Fzo/YdjA family.

The protein resides in the cytoplasm. In Danio rerio (Zebrafish), this protein is Interferon-induced GTP-binding protein MxB (mxb).